Consider the following 203-residue polypeptide: dITP/XTP pyrophosphatase (203 aa).

8-13 (TANKGK) serves as a coordination point for substrate. Glu41 and Asp70 together coordinate Mg(2+). Residue Asp70 is the Proton acceptor of the active site. Substrate-binding positions include Ser71, 153-156 (FGYD), Lys176, and 181-182 (HR).

It belongs to the HAM1 NTPase family. In terms of assembly, homodimer. The cofactor is Mg(2+).

It carries out the reaction XTP + H2O = XMP + diphosphate + H(+). It catalyses the reaction dITP + H2O = dIMP + diphosphate + H(+). The catalysed reaction is ITP + H2O = IMP + diphosphate + H(+). Its function is as follows. Pyrophosphatase that catalyzes the hydrolysis of nucleoside triphosphates to their monophosphate derivatives, with a high preference for the non-canonical purine nucleotides XTP (xanthosine triphosphate), dITP (deoxyinosine triphosphate) and ITP. Seems to function as a house-cleaning enzyme that removes non-canonical purine nucleotides from the nucleotide pool, thus preventing their incorporation into DNA/RNA and avoiding chromosomal lesions. The protein is dITP/XTP pyrophosphatase of Listeria monocytogenes serotype 4b (strain F2365).